Reading from the N-terminus, the 58-residue chain is Large ribosomal subunit protein bL32c (58 aa).

Positions 1–23 are disordered; that stretch reads MAVPKKRTSKAKKNARKSVWKKK.

This sequence belongs to the bacterial ribosomal protein bL32 family.

It is found in the plastid. Its subcellular location is the chloroplast. This chain is Large ribosomal subunit protein bL32c (rpl32-A), found in Trieres chinensis (Marine centric diatom).